A 303-amino-acid polypeptide reads, in one-letter code: Protein transport protein SEC13-2 (303 aa).

6 WD repeats span residues 7-46 (AHEG…NSSS), 53-95 (GHEG…GKMQ), 102-143 (VHSA…IAST), 149-202 (AHKF…ETYV), 209-251 (GHKD…KKND), and 261-300 (KFEQ…KWEE).

This sequence belongs to the WD repeat SEC13 family. As to quaternary structure, the COPII coat is composed of at least 5 proteins: the SEC23/24 complex, the SEC13/31 complex, and the protein SAR1. Component of the nuclear pore complex (NPC). NPC constitutes the exclusive means of nucleocytoplasmic transport. NPCs allow the passive diffusion of ions and small molecules and the active, nuclear transport receptor-mediated bidirectional transport of macromolecules such as proteins, RNAs, ribonucleoparticles (RNPs), and ribosomal subunits across the nuclear envelope. Due to its 8-fold rotational symmetry, all subunits are present with 8 copies or multiples thereof.

It is found in the cytoplasmic vesicle. It localises to the COPII-coated vesicle membrane. The protein resides in the endoplasmic reticulum membrane. The protein localises to the nucleus. Its subcellular location is the nuclear pore complex. In terms of biological role, component of the coat protein complex II (COPII) which promotes the formation of transport vesicles from the endoplasmic reticulum (ER). The coat has two main functions, the physical deformation of the endoplasmic reticulum membrane into vesicles and the selection of cargo molecules. It also functions as a component of the nuclear pore complex (NPC). NPC components, collectively referred to as nucleoporins (NUPs), can play the role of both NPC structural components and of docking or interaction partners for transiently associated nuclear transport factors. SEC13 is required for efficient mRNA export from the nucleus to the cytoplasm and for correct nuclear pore biogenesis and distribution. The chain is Protein transport protein SEC13-2 (SEC132) from Candida glabrata (strain ATCC 2001 / BCRC 20586 / JCM 3761 / NBRC 0622 / NRRL Y-65 / CBS 138) (Yeast).